Here is a 419-residue protein sequence, read N- to C-terminus: MVSYRATTETISLALEANSSEAITILYQVLEDPSSSPEAIRIKEQAITNLCDRLTEEKRGEDLRKLLTKLRPFFSLIPKAKTAKIVRGIIDAVAKIPGTTDLQITLCKEMVEWTRAEKRTFLRQRVEARLAALLMENKEYVEALALLSTLVKEVRRLDDKLLLVDIDLLESKLHFSLRNLPKAKAALTAARTAANAIYVPPAQQGTIDLQSGILHAEEKDYKTGYSYFFEAFESFNALGDPRAVFSLKYMLLCKIMVSQADDVAGIISSKAGLQYVGPDLDAMKAVADAHSKRSLKLFENALRDYKAQLEDDPIVHRHLSSLYDTLLEQNLCRLIEPFSRVEIAHIAELIGLPLDHVEKKLSQMILDKKFAGTLDQGAGCLIIFEDPKADAIYSATLETIANMGKVVDSLYVRSAKIMS.

K160 participates in a covalent cross-link: Glycyl lysine isopeptide (Lys-Gly) (interchain with G-Cter in ubiquitin). Residues 217-388 (EEKDYKTGYS…GCLIIFEDPK (172 aa)) form the PCI domain.

It belongs to the proteasome subunit S9 family. In terms of assembly, component of the 19S regulatory particle (RP/PA700) lid subcomplex of the 26S proteasome. The 26S proteasome is composed of a core protease (CP), known as the 20S proteasome, capped at one or both ends by the 19S regulatory particle (RP/PA700). The RP/PA700 complex is composed of at least 17 different subunits in two subcomplexes, the base and the lid, which form the portions proximal and distal to the 20S proteolytic core, respectively. Interacts with CSN1. In terms of tissue distribution, ubiquitous with highest expression in flowers.

Its function is as follows. Component of the lid subcomplex of the 26S proteasome, a multiprotein complex involved in the ATP-dependent degradation of ubiquitinated proteins. In the complex, RPN6A is required for proteasome assembly. This chain is 26S proteasome non-ATPase regulatory subunit 11 homolog (RPN6), found in Arabidopsis thaliana (Mouse-ear cress).